A 189-amino-acid polypeptide reads, in one-letter code: HGPRTase-like protein (189 aa).

It belongs to the purine/pyrimidine phosphoribosyltransferase family. Archaeal HPRT subfamily.

Its function is as follows. May catalyze a purine salvage reaction, the substrate is unknown. The polypeptide is HGPRTase-like protein (Halorubrum lacusprofundi (strain ATCC 49239 / DSM 5036 / JCM 8891 / ACAM 34)).